Reading from the N-terminus, the 207-residue chain is Imidazole glycerol phosphate synthase subunit HisH (207 aa).

The 206-residue stretch at 1–206 folds into the Glutamine amidotransferase type-1 domain; it reads MMIVIGYDAG…KEYVYENTAR (206 aa). The active-site Nucleophile is the C79. Residues H181 and E183 contribute to the active site.

As to quaternary structure, heterodimer of HisH and HisF.

It localises to the cytoplasm. The enzyme catalyses 5-[(5-phospho-1-deoxy-D-ribulos-1-ylimino)methylamino]-1-(5-phospho-beta-D-ribosyl)imidazole-4-carboxamide + L-glutamine = D-erythro-1-(imidazol-4-yl)glycerol 3-phosphate + 5-amino-1-(5-phospho-beta-D-ribosyl)imidazole-4-carboxamide + L-glutamate + H(+). The catalysed reaction is L-glutamine + H2O = L-glutamate + NH4(+). The protein operates within amino-acid biosynthesis; L-histidine biosynthesis; L-histidine from 5-phospho-alpha-D-ribose 1-diphosphate: step 5/9. IGPS catalyzes the conversion of PRFAR and glutamine to IGP, AICAR and glutamate. The HisH subunit catalyzes the hydrolysis of glutamine to glutamate and ammonia as part of the synthesis of IGP and AICAR. The resulting ammonia molecule is channeled to the active site of HisF. In Streptococcus gordonii (strain Challis / ATCC 35105 / BCRC 15272 / CH1 / DL1 / V288), this protein is Imidazole glycerol phosphate synthase subunit HisH.